The chain runs to 272 residues: MTEVRRRGRPGQAEPTAQKGAQALERGIAILQYLERSGGSSSVSDISGSLDLPLSTTFRLLKVLQAADFVYQDSQLGWWHIGLGVFNVGSAYIHNRDVLSVAGPFMHRLMLLSGETVNVAIRNGNEAVLIGQKECKSMVRMCAPLGSRLPLHASGAGKALLYPLTEEELVGIVVNTGLRRFTPTTLVDLPILLKNLERAREQGYTVDQEEHVVGLNCIASAIYDDAGSVVAAISISGPASRLTEDRFISQGELVRDTAKDISTALGLKPPVA.

The tract at residues 1 to 20 (MTEVRRRGRPGQAEPTAQKG) is disordered. The HTH iclR-type domain maps to 21 to 83 (AQALERGIAI…SQLGWWHIGL (63 aa)). Residues 43 to 62 (VSDISGSLDLPLSTTFRLLK) constitute a DNA-binding region (H-T-H motif). Residues 98–267 (VLSVAGPFMH…AKDISTALGL (170 aa)) form the IclR-ED domain. Residues 154-156 (SGA), aspartate 207, cysteine 217, and 234-236 (SIS) each bind glyoxylate.

In terms of biological role, negative regulator of allantoin and glyoxylate utilization operons. Binds to the gcl promoter and to the allS-allA intergenic region. The chain is HTH-type transcriptional repressor AllR (allR) from Salmonella typhi.